The following is a 76-amino-acid chain: MGGLSIWHWLIVLLIVALVFGTKKLRNIGNDLGSAVKGFKDGMKEGETPADAQQLPRTGTVDVNAKETTRSDSNKA.

Residues 1–21 (MGGLSIWHWLIVLLIVALVFG) traverse the membrane as a helical segment. A disordered region spans residues 40–76 (KDGMKEGETPADAQQLPRTGTVDVNAKETTRSDSNKA). Positions 64 to 76 (NAKETTRSDSNKA) are enriched in basic and acidic residues.

This sequence belongs to the TatA/E family. The Tat system comprises two distinct complexes: a TatABC complex, containing multiple copies of TatA, TatB and TatC subunits, and a separate TatA complex, containing only TatA subunits. Substrates initially bind to the TatABC complex, which probably triggers association of the separate TatA complex to form the active translocon.

Its subcellular location is the cell inner membrane. In terms of biological role, part of the twin-arginine translocation (Tat) system that transports large folded proteins containing a characteristic twin-arginine motif in their signal peptide across membranes. TatA could form the protein-conducting channel of the Tat system. In Burkholderia ambifaria (strain MC40-6), this protein is Sec-independent protein translocase protein TatA.